Here is a 201-residue protein sequence, read N- to C-terminus: Musculin (201 aa).

Disordered regions lie at residues methionine 1 to asparagine 108 and arginine 182 to alanine 201. Residues serine 46–proline 56 are compositionally biased toward acidic residues. A Nuclear localization signal motif is present at residues lysine 66–arginine 71. Gly residues predominate over residues aspartate 74–glycine 86. The 53-residue stretch at serine 102–leucine 154 folds into the bHLH domain.

Efficient DNA binding requires dimerization with another bHLH protein. Binds DNA as a homodimer or a heterodimer. Forms a heterodimer with TCF3.

The protein localises to the nucleus. Transcription repressor that blocks myogenesis and activation of E-box dependent muscle genes. The sequence is that of Musculin (Msc) from Mus musculus (Mouse).